The primary structure comprises 169 residues: Phosphopantetheine adenylyltransferase (169 aa).

Residue S8 coordinates substrate. Residues 8–9 and H16 contribute to the ATP site; that span reads SF. Residues K40, T72, and R86 each contribute to the substrate site. Residues 87 to 89, E97, and 122 to 128 each bind ATP; these read GLR and YSFLSSS.

It belongs to the bacterial CoaD family. Homohexamer. Requires Mg(2+) as cofactor.

It localises to the cytoplasm. The enzyme catalyses (R)-4'-phosphopantetheine + ATP + H(+) = 3'-dephospho-CoA + diphosphate. The protein operates within cofactor biosynthesis; coenzyme A biosynthesis; CoA from (R)-pantothenate: step 4/5. Reversibly transfers an adenylyl group from ATP to 4'-phosphopantetheine, yielding dephospho-CoA (dPCoA) and pyrophosphate. This is Phosphopantetheine adenylyltransferase from Cyanothece sp. (strain PCC 7425 / ATCC 29141).